The sequence spans 245 residues: Ribonuclease 3 (245 aa).

The RNase III domain occupies 24-146 (YAVFLQKLGY…IIGAIYLESG (123 aa)). E59 contacts Mg(2+). D63 is a catalytic residue. 2 residues coordinate Mg(2+): N132 and E135. The active site involves E135. Residues 173–243 (DSKTLLQEYL…ARQAYELAIV (71 aa)) enclose the DRBM domain.

Belongs to the ribonuclease III family. As to quaternary structure, homodimer. The cofactor is Mg(2+).

The protein localises to the cytoplasm. The enzyme catalyses Endonucleolytic cleavage to 5'-phosphomonoester.. In terms of biological role, digests double-stranded RNA. Involved in the processing of primary rRNA transcript to yield the immediate precursors to the large and small rRNAs (23S and 16S). Processes some mRNAs, and tRNAs when they are encoded in the rRNA operon. Processes pre-crRNA and tracrRNA of type II CRISPR loci if present in the organism. The protein is Ribonuclease 3 of Nitrosomonas europaea (strain ATCC 19718 / CIP 103999 / KCTC 2705 / NBRC 14298).